The chain runs to 440 residues: tRNA modification GTPase MnmE (440 aa).

Residues Arg23, Glu80, and Lys120 each coordinate (6S)-5-formyl-5,6,7,8-tetrahydrofolate. Residues 217–366 enclose the TrmE-type G domain; that stretch reads GLKIVIAGEP…LLAMLQAHLP (150 aa). Residue Asn227 coordinates K(+). Residues 227–232, 246–252, and 271–274 each bind GTP; these read NAGKSS, TEIAGTT, and DTAG. Position 231 (Ser231) interacts with Mg(2+). 3 residues coordinate K(+): Thr246, Ile248, and Thr251. Thr252 serves as a coordination point for Mg(2+). A (6S)-5-formyl-5,6,7,8-tetrahydrofolate-binding site is contributed by Lys440.

Belongs to the TRAFAC class TrmE-Era-EngA-EngB-Septin-like GTPase superfamily. TrmE GTPase family. In terms of assembly, homodimer. Heterotetramer of two MnmE and two MnmG subunits. The cofactor is K(+).

The protein resides in the cytoplasm. Its function is as follows. Exhibits a very high intrinsic GTPase hydrolysis rate. Involved in the addition of a carboxymethylaminomethyl (cmnm) group at the wobble position (U34) of certain tRNAs, forming tRNA-cmnm(5)s(2)U34. The sequence is that of tRNA modification GTPase MnmE from Sinorhizobium medicae (strain WSM419) (Ensifer medicae).